A 320-amino-acid chain; its full sequence is Putative membrane-bound redox modulator Alx (320 aa).

Residues 1 to 6 lie on the Periplasmic side of the membrane; the sequence is MNTVGT. Residues 7-27 traverse the membrane as a helical segment; sequence PLLWGGFAVVVAIMLAIDLLL. The Cytoplasmic segment spans residues 28–43; it reads QGRRGAHAMTMKQAAA. The helical transmembrane segment at 44-64 threads the bilayer; it reads WSLVWVTLSLLFNAAFWWYLV. At 65 to 89 the chain is on the periplasmic side; the sequence is QTEGRAVADPQALAFLTGYLIEKSL. Residues 90 to 110 form a helical membrane-spanning segment; that stretch reads AVDNVFVWLMLFSYFSVPAAL. Over 111–113 the chain is Cytoplasmic; it reads QRR. Residues 114–134 form a helical membrane-spanning segment; it reads VLVYGVLGAIVLRTIMIFTGS. Position 135 (Trp-135) is a topological domain, periplasmic. A helical transmembrane segment spans residues 136–156; the sequence is LISQFDWILYIFGAFLLFTGV. Residues 157 to 198 are Cytoplasmic-facing; the sequence is KMALAHEDESGIGDKPLVRWLRGHLRMTDTIDNEHFFVRKNG. A helical transmembrane segment spans residues 199 to 219; the sequence is LLYATPLMLVLILVELSDVIF. The Periplasmic portion of the chain corresponds to 220–225; the sequence is AVDSIP. Residues 226 to 246 traverse the membrane as a helical segment; that stretch reads AIFAVTTDPFIVLTSNLFAIL. Over 247–261 the chain is Cytoplasmic; sequence GLRAMYFLLAGVAER. The helical transmembrane segment at 262–282 threads the bilayer; sequence FSMLKYGLAVILVFIGIKMLI. Topologically, residues 283–286 are periplasmic; sequence VDFY. The chain crosses the membrane as a helical span at residues 287 to 307; the sequence is HIPIAVSLGVVFGILVMTFII. Residues 308–320 are Cytoplasmic-facing; the sequence is NAWVNYRHDKQRG.

It belongs to the TerC family.

It is found in the cell inner membrane. Has been proposed to be a redox modulator. This is Putative membrane-bound redox modulator Alx (alx) from Shigella flexneri.